A 149-amino-acid polypeptide reads, in one-letter code: 3-hydroxyacyl-[acyl-carrier-protein] dehydratase FabZ (149 aa).

Residue histidine 53 is part of the active site.

The protein belongs to the thioester dehydratase family. FabZ subfamily.

It is found in the cytoplasm. The catalysed reaction is a (3R)-hydroxyacyl-[ACP] = a (2E)-enoyl-[ACP] + H2O. Its function is as follows. Involved in unsaturated fatty acids biosynthesis. Catalyzes the dehydration of short chain beta-hydroxyacyl-ACPs and long chain saturated and unsaturated beta-hydroxyacyl-ACPs. The sequence is that of 3-hydroxyacyl-[acyl-carrier-protein] dehydratase FabZ from Polynucleobacter necessarius subsp. necessarius (strain STIR1).